The sequence spans 324 residues: Probable cell division protein WhiA (324 aa).

The segment at residues 276–310 (TLKELGEMMQGGKVSKSGINHRLRKIDEFADKLRN) is a DNA-binding region (H-T-H motif).

This sequence belongs to the WhiA family.

Functionally, involved in cell division and chromosome segregation. The chain is Probable cell division protein WhiA from Shouchella clausii (strain KSM-K16) (Alkalihalobacillus clausii).